A 289-amino-acid polypeptide reads, in one-letter code: tRNA acetyltransferase TAN1 (289 aa).

Basic and acidic residues predominate over residues 1–10 (MGEKRNRNGK). Disordered regions lie at residues 1–31 (MGEK…DPGT) and 64–83 (DIKE…LSIE). Residue Ser-72 is modified to Phosphoserine. Residues 146-259 (ADPKNMVKRT…KSNIGMCVVD (114 aa)) enclose the THUMP domain.

It localises to the cytoplasm. The protein localises to the nucleus. In terms of biological role, probable tRNA acetyltransferase required for the formation of the modified nucleoside N(4)-acetylcytidine in serine and leucine tRNAs. Binds RNA. In Saccharomyces cerevisiae (strain ATCC 204508 / S288c) (Baker's yeast), this protein is tRNA acetyltransferase TAN1 (TAN1).